The following is a 131-amino-acid chain: Small ribosomal subunit protein uS8 (131 aa).

Belongs to the universal ribosomal protein uS8 family. As to quaternary structure, part of the 30S ribosomal subunit. Contacts proteins S5 and S12.

Functionally, one of the primary rRNA binding proteins, it binds directly to 16S rRNA central domain where it helps coordinate assembly of the platform of the 30S subunit. The chain is Small ribosomal subunit protein uS8 from Geobacillus stearothermophilus (Bacillus stearothermophilus).